We begin with the raw amino-acid sequence, 414 residues long: Alanine--glyoxylate aminotransferase (414 aa).

The N-terminal 23 residues, Met1 to Met23, are a transit peptide targeting the mitochondrion. Residue Lys231 is modified to N6-(pyridoxal phosphate)lysine. The residue at position 247 (Lys247) is an N6-acetyllysine; alternate. Position 247 is an N6-succinyllysine; alternate (Lys247). N6-acetyllysine occurs at positions 256 and 334. Arg382 is a substrate binding site. Residues Asn412–Leu414 carry the Microbody targeting signal motif.

The protein belongs to the class-V pyridoxal-phosphate-dependent aminotransferase family. As to quaternary structure, homodimer. The cofactor is pyridoxal 5'-phosphate.

Its subcellular location is the peroxisome. The protein resides in the mitochondrion matrix. The catalysed reaction is L-serine + pyruvate = 3-hydroxypyruvate + L-alanine. It carries out the reaction glyoxylate + L-alanine = glycine + pyruvate. In terms of biological role, catalyzes the transamination of glyoxylate to glycine and contributes to the glyoxylate detoxification. Functionally, catalyzes the transamination between L-serine and pyruvate and contributes to gluconeogenesis from the L-serine metabolism. This is Alanine--glyoxylate aminotransferase from Felis catus (Cat).